Here is a 421-residue protein sequence, read N- to C-terminus: Trimethyllysine dioxygenase, mitochondrial (421 aa).

Residues 1–15 (MWYHRLSHLHSRLQD) constitute a mitochondrion transit peptide. 2 positions are modified to N6-acetyllysine: Lys179 and Lys236. Fe cation contacts are provided by His242, Asp244, and His389.

Belongs to the gamma-BBH/TMLD family. In terms of assembly, homodimer. It depends on Fe(2+) as a cofactor. L-ascorbate serves as cofactor. As to expression, all isoforms, but isoform 8, are widely expressed in adult and fetal tissues. Isoform 8 is restricted to heart and skeletal muscle.

The protein localises to the mitochondrion matrix. It catalyses the reaction N(6),N(6),N(6)-trimethyl-L-lysine + 2-oxoglutarate + O2 = (3S)-3-hydroxy-N(6),N(6),N(6)-trimethyl-L-lysine + succinate + CO2. It participates in amine and polyamine biosynthesis; carnitine biosynthesis. Functionally, converts trimethyllysine (TML) into hydroxytrimethyllysine (HTML). This Homo sapiens (Human) protein is Trimethyllysine dioxygenase, mitochondrial (TMLHE).